Consider the following 601-residue polypeptide: Potassium-transporting ATPase potassium-binding subunit (601 aa).

12 helical membrane-spanning segments follow: residues 3 to 23 (ASAW…AWPL), 62 to 82 (HYAL…YALQ), 132 to 152 (LGLS…AFAL), 179 to 199 (AWVL…QGVI), 283 to 303 (LTNL…CFAF), 314 to 334 (VAIL…VTAA), 367 to 387 (FGIS…CGAV), 397 to 417 (LGGM…GGAG), 419 to 439 (GLYG…LMIG), 459 to 479 (VAIL…VLAP), 523 to 543 (VLLA…VLAI), and 564 to 584 (GPLF…LNYV).

It belongs to the KdpA family. The system is composed of three essential subunits: KdpA, KdpB and KdpC.

It localises to the cell inner membrane. Part of the high-affinity ATP-driven potassium transport (or Kdp) system, which catalyzes the hydrolysis of ATP coupled with the electrogenic transport of potassium into the cytoplasm. This subunit binds the periplasmic potassium ions and delivers the ions to the membrane domain of KdpB through an intramembrane tunnel. In Paracidovorax citrulli (strain AAC00-1) (Acidovorax citrulli), this protein is Potassium-transporting ATPase potassium-binding subunit.